A 595-amino-acid chain; its full sequence is Putative capsid protein V20 (595 aa).

The protein localises to the virion. Functionally, may self assemble to form an icosahedral capsid. Most abundant protein in the virion. This is Putative capsid protein V20 from Sputnik virophage.